The sequence spans 441 residues: Ribosomal protein uS12 methylthiotransferase RimO (441 aa).

Residues 7 to 117 (PKISFVSLGC…VLEAVHRARP (111 aa)) enclose the MTTase N-terminal domain. The [4Fe-4S] cluster site is built by Cys-16, Cys-52, Cys-81, Cys-148, Cys-152, and Cys-155. Positions 134–371 (LTPRHYAYLK…MARQQAISAR (238 aa)) constitute a Radical SAM core domain. The 67-residue stretch at 374-440 (KRKVGTRQQV…AYDLHGTVAG (67 aa)) folds into the TRAM domain.

It belongs to the methylthiotransferase family. RimO subfamily. It depends on [4Fe-4S] cluster as a cofactor.

It is found in the cytoplasm. The catalysed reaction is L-aspartate(89)-[ribosomal protein uS12]-hydrogen + (sulfur carrier)-SH + AH2 + 2 S-adenosyl-L-methionine = 3-methylsulfanyl-L-aspartate(89)-[ribosomal protein uS12]-hydrogen + (sulfur carrier)-H + 5'-deoxyadenosine + L-methionine + A + S-adenosyl-L-homocysteine + 2 H(+). Catalyzes the methylthiolation of an aspartic acid residue of ribosomal protein uS12. This Rhodopseudomonas palustris (strain ATCC BAA-98 / CGA009) protein is Ribosomal protein uS12 methylthiotransferase RimO.